We begin with the raw amino-acid sequence, 259 residues long: Probable UMP-CMP kinase 2 (259 aa).

63 to 68 (GSGKGT) lines the ATP pocket. Positions 83 to 112 (SAGDLLRREIAMHTENGAMILNLIKDGKIV) are NMP. A ribonucleoside 5'-phosphate contacts are provided by residues arginine 89, 110 to 112 (KIV), and 137 to 140 (GFPR). Asparagine 144 contacts CMP. The interval 175–183 (NRNQGRIDD) is LID. Residue arginine 176 coordinates ATP. Positions 180 and 191 each coordinate a ribonucleoside 5'-phosphate. Glycine 219 lines the ATP pocket.

It belongs to the adenylate kinase family. UMP-CMP kinase subfamily. As to quaternary structure, monomer. Requires Mg(2+) as cofactor.

It localises to the cytoplasm. The protein localises to the nucleus. The catalysed reaction is CMP + ATP = CDP + ADP. The enzyme catalyses dCMP + ATP = dCDP + ADP. It catalyses the reaction UMP + ATP = UDP + ADP. Catalyzes the phosphorylation of pyrimidine nucleoside monophosphates at the expense of ATP. Plays an important role in de novo pyrimidine nucleotide biosynthesis. Has preference for UMP and CMP as phosphate acceptors. This chain is Probable UMP-CMP kinase 2 (UMK2), found in Arabidopsis thaliana (Mouse-ear cress).